A 130-amino-acid chain; its full sequence is Small ribosomal subunit protein uS9 (130 aa).

This sequence belongs to the universal ribosomal protein uS9 family.

In Albidiferax ferrireducens (strain ATCC BAA-621 / DSM 15236 / T118) (Rhodoferax ferrireducens), this protein is Small ribosomal subunit protein uS9.